A 755-amino-acid chain; its full sequence is MAGCLVPECADDISILLIDHDTASIASLTSMLQQFSKRVMSVDVASKALSMIEKQKKEIGLIIANIEMPHIDSHSFLNALLLKDIPLILINPEIKTKEPSDLLTKRACFSLDKPISNDDIKNMWQHVFSKKSQELKKINITEDQENVMDKDTYQIEAFRANLKRQRISQASLLGRRPFIDTFSTYETFQKRKSIANVEWKTTPSYAIEIENKRKEWKKSVGRRKSLWNSERHMKFIAAISILGEEDFRPKSILEIMNDPNLTHRQVGSHLQKYKAQIDQISYTLPRNESRSIDKTFEYPSNYKYPFKISDLTNNLIVSNSLWNSLEKKNSASASITQFLFKKPIGEKEETMPKFHIGGKLDLSNHSVHGNVLNKLSMNVNFVPSTISNNPAYNILSIDSSSIDSSSYTGLVSTGLSSENSPILYGLPSNDGASNTCTSQMESERISIPQYDPNQCHPHRSILETDVNQIDLDFTSILDSFDPLVDECLMKENNRFLPNPTMNLLDTDIDKMDWVSFIENLSHHDINMNHMDWDPSTANYVLPETNMNINFPEKHTNEIGWVSSQVGYVPFENMIPSEVDINHMGMGYSGGSIPPQEETNTNNVGFVSCEIHSEIPPKTNMAILETNYSNPLDWVFPEDITSLETNTIQKSLVSCETSYDALDNMVPLETNMEEMNDALYDISIEDLISFDIDANEKDIFSWLEDNGFSEENNMMESCEYHNIESVNQSDDMKIDDNFDDYRECMDWINEEMNKDV.

The region spanning Ser-14–Phe-128 is the Response regulatory domain.

This sequence belongs to the ARR-like family.

The protein resides in the nucleus. The sequence is that of Putative two-component response regulator-like APRR6 (APRR6) from Arabidopsis thaliana (Mouse-ear cress).